The sequence spans 295 residues: Hydroxyquinol 1,2-dioxygenase (295 aa).

Fe cation-binding residues include tyrosine 165, tyrosine 200, histidine 224, and histidine 226.

It belongs to the intradiol ring-cleavage dioxygenase family. Fe(3+) is required as a cofactor.

The catalysed reaction is benzene-1,2,4-triol + O2 = maleylacetate + 2 H(+). The protein operates within aromatic compound metabolism. In terms of biological role, involved in the gamma-resorcylate (2,6-dihydroxybenzoate) catabolism. Catalyzes the conversion of hydroxyquinol to malelylacetate. The protein is Hydroxyquinol 1,2-dioxygenase of Rhizobium sp. (strain MTP-10005).